The following is a 559-amino-acid chain: MACVSDLVAFTQPLIIGAKPLEIVRRSAAFHPNVWGDYFLKLSQDEKKLESMRERAKVLKEKVLKKLSTIEGGERLELIDTLYHLGVAYNFEKEIEEALEKIYKAYDEDATQDNLCTLALRFRLLRQHGWNASSDVFNKFKETKNGNFKESVASDVLGMLSLYEASYVGTKEDKILEEAISFTTRNLSAALPNMEPLLAERVAHSLELPLHKRLQRLEARYFITMYEKNNAHDEMLLEYAKLDYNLLQALHQNEMKELTKWWTKIDLVGKMKFPRDRVTECYFWPLGAFFEPQHSRGRIFATKITQLTSIIDDLYDVYGTQEELQLFTDVIQRWDMNAKKSLPDYIKPLYEALLSTLKDFEEELSLEGNAYRASFMQQAMKNICMAYFDEAKWYNRGTTPKVEEYLNSAEISCGYPVVATACFTGAGEITTKKLLEWIQSQPKYMKDTCRLCRIVDDIKTYKFEEERGHVASVVACYMEEHKCNEDEALEKLNEDVMNTWKDINKACMRPTPFPMVVMNIIRNLSRVMEILYQFGDGYTFADTVTKERLNLLLKDPIPV.

D312, D316, D456, and E464 together coordinate Mg(2+). A DDXXD motif motif is present at residues 312 to 316; sequence DDLYD.

It belongs to the terpene synthase family. Tpsa subfamily. Requires Mg(2+) as cofactor. Mn(2+) serves as cofactor. In terms of tissue distribution, mostly expressed in stems and, to a lower extent, in leaves, roots and fruits.

It catalyses the reaction (2E,6E)-farnesyl diphosphate = (-)-(E)-beta-caryophyllene + diphosphate. It carries out the reaction (2E,6E)-farnesyl diphosphate = alpha-humulene + diphosphate. It functions in the pathway secondary metabolite biosynthesis; terpenoid biosynthesis. Functionally, sesquiterpene synthase involved in the biosynthesis of volatile compounds that contribute to the characteristic flavors of black pepper. Mediates the conversion of (2E,6E)-farnesyl diphosphate (FPP) into beta-caryophyllene and, as a minor compound, into alpha-humulene. In Piper nigrum (Black pepper), this protein is Terpene synthase 1.